A 316-amino-acid polypeptide reads, in one-letter code: 4-hydroxy-3-methylbut-2-enyl diphosphate reductase (316 aa).

A [4Fe-4S] cluster-binding site is contributed by Cys18. (2E)-4-hydroxy-3-methylbut-2-enyl diphosphate is bound by residues His47 and His80. Dimethylallyl diphosphate-binding residues include His47 and His80. Residues His47 and His80 each coordinate isopentenyl diphosphate. Residue Cys102 participates in [4Fe-4S] cluster binding. His130 contributes to the (2E)-4-hydroxy-3-methylbut-2-enyl diphosphate binding site. His130 contacts dimethylallyl diphosphate. His130 contacts isopentenyl diphosphate. Glu132 (proton donor) is an active-site residue. Thr171 serves as a coordination point for (2E)-4-hydroxy-3-methylbut-2-enyl diphosphate. [4Fe-4S] cluster is bound at residue Cys201. Positions 229, 230, 231, and 274 each coordinate (2E)-4-hydroxy-3-methylbut-2-enyl diphosphate. Residues Ser229, Ser230, Asn231, and Ser274 each coordinate dimethylallyl diphosphate. The isopentenyl diphosphate site is built by Ser229, Ser230, Asn231, and Ser274.

Belongs to the IspH family. [4Fe-4S] cluster serves as cofactor.

It carries out the reaction isopentenyl diphosphate + 2 oxidized [2Fe-2S]-[ferredoxin] + H2O = (2E)-4-hydroxy-3-methylbut-2-enyl diphosphate + 2 reduced [2Fe-2S]-[ferredoxin] + 2 H(+). It catalyses the reaction dimethylallyl diphosphate + 2 oxidized [2Fe-2S]-[ferredoxin] + H2O = (2E)-4-hydroxy-3-methylbut-2-enyl diphosphate + 2 reduced [2Fe-2S]-[ferredoxin] + 2 H(+). The protein operates within isoprenoid biosynthesis; dimethylallyl diphosphate biosynthesis; dimethylallyl diphosphate from (2E)-4-hydroxy-3-methylbutenyl diphosphate: step 1/1. Its pathway is isoprenoid biosynthesis; isopentenyl diphosphate biosynthesis via DXP pathway; isopentenyl diphosphate from 1-deoxy-D-xylulose 5-phosphate: step 6/6. Catalyzes the conversion of 1-hydroxy-2-methyl-2-(E)-butenyl 4-diphosphate (HMBPP) into a mixture of isopentenyl diphosphate (IPP) and dimethylallyl diphosphate (DMAPP). Acts in the terminal step of the DOXP/MEP pathway for isoprenoid precursor biosynthesis. This is 4-hydroxy-3-methylbut-2-enyl diphosphate reductase from Paracoccus denitrificans (strain Pd 1222).